The sequence spans 530 residues: uncharacterized protein (530 aa).

The protein belongs to the mimivirus R640 family.

This is an uncharacterized protein from Acanthamoeba polyphaga (Amoeba).